The sequence spans 217 residues: Polyadenylate-binding protein 3 (217 aa).

Residues 1 to 28 are disordered; sequence MEEEEHEVYGGEIPEVGDTDVPDPDIDM. Residues 15-28 are compositionally biased toward acidic residues; sequence EVGDTDVPDPDIDM. A coiled-coil region spans residues 30-71; that stretch reads AADEDAVTELAEMKRRLKEMEEEAAALREMQAKVEKEMGATQ. The segment at 75-216 is necessary for homooligomerization; sequence SMAANQEGKE…FRRPMRYMPY (142 aa). The RRM domain maps to 89–165; that stretch reads RSVYVGNVDY…RQLKVSPKRT (77 aa). The short motif at 162–169 is the Nuclear localization signal element; sequence PKRTNVPG.

Monomer and homooligomer. Binds RNA as a monomer and oligomerizes when bound to poly(A). Forms a complex with cleavage and polyadenylation specificity factor (CPSF) subunits PAPS4, PABN1, PABN2, CSTF50 and FIPS5. Interacts with CSP3.

It is found in the nucleus speckle. It localises to the cytoplasm. In terms of biological role, involved in the 3'-end formation of mRNA precursors (pre-mRNA) by the addition of a poly(A) tail of 200-250 nt to the upstream cleavage product. Stimulates poly(A) polymerase (PAPOLA) conferring processivity on the poly(A) tail elongation reaction and also controls the poly(A) tail length. Increases the affinity of poly(A) polymerase for RNA. Binds to poly(A) and to poly(G) with high affinity. May protect the poly(A) tail from degradation. The protein is Polyadenylate-binding protein 3 of Arabidopsis thaliana (Mouse-ear cress).